Consider the following 275-residue polypeptide: Exosome complex component RRP40 (275 aa).

At Ala-2 the chain carries N-acetylalanine. Lys-151 is covalently cross-linked (Glycyl lysine isopeptide (Lys-Gly) (interchain with G-Cter in SUMO2)).

The protein belongs to the RRP40 family. In terms of assembly, component of the RNA exosome core complex (Exo-9), composed of EXOSC1, EXOSC2, EXOSC3, EXOSC4, EXOSC5, EXOSC6, EXOSC7, EXOSC8 and EXOSC9; within the complex interacts with EXOSC5 and EXOSC9. The catalytically inactive RNA exosome core complex (Exo-9) associates with the catalytic subunit EXOSC10/RRP6. Exo-9 may associate with DIS3 to form the nucleolar exosome complex, or DIS3L to form the cytoplasmic exosome complex. Exo-9 is formed by a hexameric base ring consisting of the heterodimers EXOSC4-EXOSC9, EXOSC5-EXOSC8 and EXOSC6-EXOSC7, and a cap ring consisting of EXOSC1, EXOSC2 and EXOSC3. The RNA exosome complex associates with cofactors C1D/RRP47, MPHOSPH6/MPP6 and MTREX/MTR4. Interacts with MPHOSPH6/MPP6; the interaction is direct. Interacts with GTPBP1. Interacts with ZC3HAV1. Interacts with DDX17 only in the presence of ZC3HAV1 in an RNA-independent manner. Interacts with DHX36; this interaction occurs in a RNase-insensitive manner. Interacts with HBS1L isoform 2.

It localises to the cytoplasm. It is found in the nucleus. Its subcellular location is the nucleolus. In terms of biological role, non-catalytic component of the RNA exosome complex which has 3'-&gt;5' exoribonuclease activity and participates in a multitude of cellular RNA processing and degradation events. In the nucleus, the RNA exosome complex is involved in proper maturation of stable RNA species such as rRNA, snRNA and snoRNA, in the elimination of RNA processing by-products and non-coding 'pervasive' transcripts, such as antisense RNA species and promoter-upstream transcripts (PROMPTs), and of mRNAs with processing defects, thereby limiting or excluding their export to the cytoplasm. The RNA exosome may be involved in Ig class switch recombination (CSR) and/or Ig variable region somatic hypermutation (SHM) by targeting AICDA deamination activity to transcribed dsDNA substrates. In the cytoplasm, the RNA exosome complex is involved in general mRNA turnover and specifically degrades inherently unstable mRNAs containing AU-rich elements (AREs) within their 3' untranslated regions, and in RNA surveillance pathways, preventing translation of aberrant mRNAs. It seems to be involved in degradation of histone mRNA. The catalytic inactive RNA exosome core complex of 9 subunits (Exo-9) is proposed to play a pivotal role in the binding and presentation of RNA for ribonucleolysis, and to serve as a scaffold for the association with catalytic subunits and accessory proteins or complexes. EXOSC3 as peripheral part of the Exo-9 complex stabilizes the hexameric ring of RNase PH-domain subunits through contacts with EXOSC9 and EXOSC5. This chain is Exosome complex component RRP40 (EXOSC3), found in Bos taurus (Bovine).